Reading from the N-terminus, the 461-residue chain is Chromosomal replication initiator protein DnaA (461 aa).

Residues 1–90 are domain I, interacts with DnaA modulators; that stretch reads MAVSLWQQCI…RPSARPVAPA (90 aa). The interval 91 to 124 is domain II; it reads PVAAKPVNRQTKAQVGTTSFNTQAEPIINPNHRS. A domain III, AAA+ region region spans residues 125-341; sequence NINPTYQFDN…GALNRVIANA (217 aa). Residues Gly169, Gly171, Lys172, and Thr173 each contribute to the ATP site. A domain IV, binds dsDNA region spans residues 342–461; the sequence is NFTGRPITID…YANLIRTLSS (120 aa).

The protein belongs to the DnaA family. Oligomerizes as a right-handed, spiral filament on DNA at oriC.

It localises to the cytoplasm. In terms of biological role, plays an essential role in the initiation and regulation of chromosomal replication. ATP-DnaA binds to the origin of replication (oriC) to initiate formation of the DNA replication initiation complex once per cell cycle. Binds the DnaA box (a 9 base pair repeat at the origin) and separates the double-stranded (ds)DNA. Forms a right-handed helical filament on oriC DNA; dsDNA binds to the exterior of the filament while single-stranded (ss)DNA is stabiized in the filament's interior. The ATP-DnaA-oriC complex binds and stabilizes one strand of the AT-rich DNA unwinding element (DUE), permitting loading of DNA polymerase. After initiation quickly degrades to an ADP-DnaA complex that is not apt for DNA replication. Binds acidic phospholipids. This chain is Chromosomal replication initiator protein DnaA, found in Shewanella frigidimarina (strain NCIMB 400).